The following is a 99-amino-acid chain: MNSQEKLLKTVVRPHVSDKTYGLSDANSTIVFEVARTATKQDVKSAVEKLFEVKVESVNILNVKGKARRFGRVEGRTKAWKKAYVKLAEGHDINFVGAE.

This sequence belongs to the universal ribosomal protein uL23 family. In terms of assembly, part of the 50S ribosomal subunit. Contacts protein L29, and trigger factor when it is bound to the ribosome.

One of the early assembly proteins it binds 23S rRNA. One of the proteins that surrounds the polypeptide exit tunnel on the outside of the ribosome. Forms the main docking site for trigger factor binding to the ribosome. The protein is Large ribosomal subunit protein uL23 of Francisella philomiragia subsp. philomiragia (strain ATCC 25017 / CCUG 19701 / FSC 153 / O#319-036).